The sequence spans 97 residues: Aspartyl/glutamyl-tRNA(Asn/Gln) amidotransferase subunit C (97 aa).

The segment at 74 to 97 (AEQALDQAPASQRDRFEVPRILGE) is disordered. Positions 85–97 (QRDRFEVPRILGE) are enriched in basic and acidic residues.

This sequence belongs to the GatC family. As to quaternary structure, heterotrimer of A, B and C subunits.

The catalysed reaction is L-glutamyl-tRNA(Gln) + L-glutamine + ATP + H2O = L-glutaminyl-tRNA(Gln) + L-glutamate + ADP + phosphate + H(+). It catalyses the reaction L-aspartyl-tRNA(Asn) + L-glutamine + ATP + H2O = L-asparaginyl-tRNA(Asn) + L-glutamate + ADP + phosphate + 2 H(+). In terms of biological role, allows the formation of correctly charged Asn-tRNA(Asn) or Gln-tRNA(Gln) through the transamidation of misacylated Asp-tRNA(Asn) or Glu-tRNA(Gln) in organisms which lack either or both of asparaginyl-tRNA or glutaminyl-tRNA synthetases. The reaction takes place in the presence of glutamine and ATP through an activated phospho-Asp-tRNA(Asn) or phospho-Glu-tRNA(Gln). The polypeptide is Aspartyl/glutamyl-tRNA(Asn/Gln) amidotransferase subunit C (Corynebacterium kroppenstedtii (strain DSM 44385 / JCM 11950 / CIP 105744 / CCUG 35717)).